We begin with the raw amino-acid sequence, 106 residues long: Putative double-stranded DNA mimic protein VCM66_1163 (106 aa).

This sequence belongs to the putative dsDNA mimic protein family.

In terms of biological role, may act as a double-stranded DNA (dsDNA) mimic. Probably regulates the activity of a dsDNA-binding protein. The protein is Putative double-stranded DNA mimic protein VCM66_1163 of Vibrio cholerae serotype O1 (strain M66-2).